A 252-amino-acid chain; its full sequence is MSLMPFDDFYYPYQLRRRSPRWMDSTGSPWDSFATSRDWMTTPYSSTGIGRRDLSQDWMTTPYTPAGVGRRDLSQDWMTTPYTSKGIGSRNLSSWGSKSETIREMEKKFDELVRKVDRRFTGMLSMLDDPEPFARQNISVEHEGKTTSKTTKLQDFNMKVDVQDFKPEEVKVKVQGGQVLVHAKRENRDEGDGMFAYSCSEFKRAFILPEGVSAERLTSSLSRDGILQIDAPVAVAIDNKKTAVPVTVEHTK.

Ser2 carries the N-acetylserine modification. 3 repeat units span residues 37 to 55 (RDWM…RDLS), 56 to 74 (QDWM…RDLS), and 75 to 93 (QDWM…RNLS). The 3 X 19 AA approximate tandem repeats stretch occupies residues 37 to 93 (RDWMTTPYSSTGIGRRDLSQDWMTTPYTPAGVGRRDLSQDWMTTPYTSKGIGSRNLS). A sHSP domain is found at 138–249 (ISVEHEGKTT…KKTAVPVTVE (112 aa)).

It belongs to the small heat shock protein (HSP20) family. In terms of assembly, exists as an oligomer.

The protein localises to the membrane. In terms of biological role, may be a component of myofibrils where it acts as a stabilizer. This is Body wall muscle protein HR-29 from Halocynthia roretzi (Sea squirt).